Consider the following 208-residue polypeptide: Methyl-CpG-binding domain protein 3-like 5 (208 aa).

The protein belongs to the MBD3L family.

The chain is Methyl-CpG-binding domain protein 3-like 5 (MBD3L5) from Homo sapiens (Human).